Reading from the N-terminus, the 193-residue chain is Ribosomal RNA small subunit methyltransferase G (193 aa).

S-adenosyl-L-methionine-binding positions include G64, L69, 113 to 114 (IE), and R126.

It belongs to the methyltransferase superfamily. RNA methyltransferase RsmG family.

Its subcellular location is the cytoplasm. It carries out the reaction guanosine(527) in 16S rRNA + S-adenosyl-L-methionine = N(7)-methylguanosine(527) in 16S rRNA + S-adenosyl-L-homocysteine. Its function is as follows. Specifically methylates the N7 position of guanine in position 527 of 16S rRNA. This is Ribosomal RNA small subunit methyltransferase G from Rickettsia massiliae (strain Mtu5).